A 567-amino-acid polypeptide reads, in one-letter code: Low-affinity glucose transporter HXT3 (567 aa).

The segment covering 1–29 (MNSTPDLISPQKSSENSNADLPSNSSQVM) has biased composition (polar residues). Residues 1-30 (MNSTPDLISPQKSSENSNADLPSNSSQVMN) are disordered. Residues 1–57 (MNSTPDLISPQKSSENSNADLPSNSSQVMNMPEEKGVQDDFQAEADQVLTNPNTGKG) lie on the Cytoplasmic side of the membrane. Ser23 carries the post-translational modification Phosphoserine. Residues 58–78 (AYVTVSICCVMVAFGGFVFGW) form a helical membrane-spanning segment. The Extracellular portion of the chain corresponds to 79-113 (DTGTISGFVAQTDFLRRFGMKHKDGSYYLSKVRTG). Residues 114–134 (LIVSIFNIGCAIGGIILAKLG) traverse the membrane as a helical segment. At 135 to 140 (DMYGRK) the chain is on the cytoplasmic side. Residues 141-161 (MGLIVVVVIYIIGIIIQIASI) traverse the membrane as a helical segment. Residues 162-171 (NKWYQYFIGR) are Extracellular-facing. The chain crosses the membrane as a helical span at residues 172–192 (IISGLGVGGIAVLSPMLISEV). Residues 193-198 (APKEMR) are Cytoplasmic-facing. A helical membrane pass occupies residues 199-219 (GTLVSCYQLMITLGIFLGYCT). The Extracellular segment spans residues 220-233 (NFGTKNYSNSVQWR). Asn225 carries an N-linked (GlcNAc...) asparagine glycan. A helical transmembrane segment spans residues 234–254 (VPLGLCFAWALFMIGGMTFVP). Residues 255–337 (ESPRYLVEAG…IQSLQQLTGD (83 aa)) are Cytoplasmic-facing. The helical transmembrane segment at 338–354 (NYFFYYGTTVFNAVGMS) threads the bilayer. Residues 355-360 (DSFETS) are Extracellular-facing. A helical transmembrane segment spans residues 361–378 (IVFGVVNFFSTCCSLYTV). The Cytoplasmic portion of the chain corresponds to 379 to 385 (DRFGRRN). Residues 386-406 (CLLYGAIGMVCCYVVYASVGV) traverse the membrane as a helical segment. Residues 407–428 (TRLWPNGEGNGSSKGAGNCMIV) are Extracellular-facing. Asn416 is a glycosylation site (N-linked (GlcNAc...) asparagine). A helical membrane pass occupies residues 429–449 (FACFYIFCFATTWAPIAYVVI). The Cytoplasmic portion of the chain corresponds to 450–466 (SETFPLRVKSKAMSIAT). A helical membrane pass occupies residues 467–487 (AANWLWGFLIGFFTPFITGAI). Asn488 is a topological domain (extracellular). A helical transmembrane segment spans residues 489-509 (FYYGYVFMGCMVFAYFYVFFF). At 510 to 567 (VPETKGLTLEEVNDMYAEGVLPWKSASWVPTSQRGANYDADALMHDDQPFYKKMFGKK) the chain is on the cytoplasmic side.

The protein belongs to the major facilitator superfamily. Sugar transporter (TC 2.A.1.1) family.

Its subcellular location is the membrane. Functionally, low-affinity glucose transporter. The chain is Low-affinity glucose transporter HXT3 (HXT3) from Saccharomyces cerevisiae (strain ATCC 204508 / S288c) (Baker's yeast).